The sequence spans 228 residues: Imidazole glycerol phosphate synthase subunit HisH (228 aa).

Residues 4–218 (DIAVVDYGMG…VTWNPGEHAS (215 aa)) form the Glutamine amidotransferase type-1 domain. Cys-83 functions as the Nucleophile in the catalytic mechanism. Catalysis depends on residues His-193 and Glu-195.

As to quaternary structure, heterodimer of HisH and HisF.

The protein resides in the cytoplasm. It carries out the reaction 5-[(5-phospho-1-deoxy-D-ribulos-1-ylimino)methylamino]-1-(5-phospho-beta-D-ribosyl)imidazole-4-carboxamide + L-glutamine = D-erythro-1-(imidazol-4-yl)glycerol 3-phosphate + 5-amino-1-(5-phospho-beta-D-ribosyl)imidazole-4-carboxamide + L-glutamate + H(+). The enzyme catalyses L-glutamine + H2O = L-glutamate + NH4(+). The protein operates within amino-acid biosynthesis; L-histidine biosynthesis; L-histidine from 5-phospho-alpha-D-ribose 1-diphosphate: step 5/9. In terms of biological role, IGPS catalyzes the conversion of PRFAR and glutamine to IGP, AICAR and glutamate. The HisH subunit catalyzes the hydrolysis of glutamine to glutamate and ammonia as part of the synthesis of IGP and AICAR. The resulting ammonia molecule is channeled to the active site of HisF. This Thiobacillus denitrificans (strain ATCC 25259 / T1) protein is Imidazole glycerol phosphate synthase subunit HisH.